Here is a 207-residue protein sequence, read N- to C-terminus: Histidine biosynthesis bifunctional protein HisIE (207 aa).

The interval 1-117 is phosphoribosyl-AMP cyclohydrolase; that stretch reads MSLVTTINWE…GKQEQPALVF (117 aa). Residues 118–207 form a phosphoribosyl-ATP pyrophosphohydrolase region; the sequence is LHQLEQVLAN…TEKLQERHNK (90 aa).

This sequence in the N-terminal section; belongs to the PRA-CH family. The protein in the C-terminal section; belongs to the PRA-PH family.

The protein localises to the cytoplasm. It catalyses the reaction 1-(5-phospho-beta-D-ribosyl)-ATP + H2O = 1-(5-phospho-beta-D-ribosyl)-5'-AMP + diphosphate + H(+). The catalysed reaction is 1-(5-phospho-beta-D-ribosyl)-5'-AMP + H2O = 1-(5-phospho-beta-D-ribosyl)-5-[(5-phospho-beta-D-ribosylamino)methylideneamino]imidazole-4-carboxamide. Its pathway is amino-acid biosynthesis; L-histidine biosynthesis; L-histidine from 5-phospho-alpha-D-ribose 1-diphosphate: step 2/9. It functions in the pathway amino-acid biosynthesis; L-histidine biosynthesis; L-histidine from 5-phospho-alpha-D-ribose 1-diphosphate: step 3/9. The sequence is that of Histidine biosynthesis bifunctional protein HisIE from Photobacterium profundum (strain SS9).